We begin with the raw amino-acid sequence, 941 residues long: Bifunctional glutamine synthetase adenylyltransferase/adenylyl-removing enzyme (941 aa).

The segment at Met1–Gly431 is adenylyl removase. Positions Asn447–Lys941 are adenylyl transferase.

The protein belongs to the GlnE family. Mg(2+) serves as cofactor.

The enzyme catalyses [glutamine synthetase]-O(4)-(5'-adenylyl)-L-tyrosine + phosphate = [glutamine synthetase]-L-tyrosine + ADP. It catalyses the reaction [glutamine synthetase]-L-tyrosine + ATP = [glutamine synthetase]-O(4)-(5'-adenylyl)-L-tyrosine + diphosphate. Functionally, involved in the regulation of glutamine synthetase GlnA, a key enzyme in the process to assimilate ammonia. When cellular nitrogen levels are high, the C-terminal adenylyl transferase (AT) inactivates GlnA by covalent transfer of an adenylyl group from ATP to specific tyrosine residue of GlnA, thus reducing its activity. Conversely, when nitrogen levels are low, the N-terminal adenylyl removase (AR) activates GlnA by removing the adenylyl group by phosphorolysis, increasing its activity. The regulatory region of GlnE binds the signal transduction protein PII (GlnB) which indicates the nitrogen status of the cell. The polypeptide is Bifunctional glutamine synthetase adenylyltransferase/adenylyl-removing enzyme (Bordetella pertussis (strain Tohama I / ATCC BAA-589 / NCTC 13251)).